A 505-amino-acid chain; its full sequence is Glycerol kinase (505 aa).

Thr-15 is an ADP binding site. ATP-binding residues include Thr-15, Thr-16, and Ser-17. Residue Thr-15 coordinates sn-glycerol 3-phosphate. Arg-19 contacts ADP. Sn-glycerol 3-phosphate-binding residues include Arg-85, Glu-86, Tyr-136, and Asp-249. Glycerol-binding residues include Arg-85, Glu-86, Tyr-136, Asp-249, and Gln-250. Residues Thr-271 and Gly-314 each coordinate ADP. 4 residues coordinate ATP: Thr-271, Gly-314, Gln-318, and Gly-415. ADP-binding residues include Gly-415 and Asn-419.

The protein belongs to the FGGY kinase family.

It catalyses the reaction glycerol + ATP = sn-glycerol 3-phosphate + ADP + H(+). The protein operates within polyol metabolism; glycerol degradation via glycerol kinase pathway; sn-glycerol 3-phosphate from glycerol: step 1/1. With respect to regulation, inhibited by fructose 1,6-bisphosphate (FBP). Key enzyme in the regulation of glycerol uptake and metabolism. Catalyzes the phosphorylation of glycerol to yield sn-glycerol 3-phosphate. The polypeptide is Glycerol kinase (Mycoplasma capricolum subsp. capricolum (strain California kid / ATCC 27343 / NCTC 10154)).